The primary structure comprises 452 residues: Isocitrate dehydrogenase [NADP], mitochondrial (452 aa).

A mitochondrion-targeting transit peptide spans 1–39 (MAGYLRAVSSLCRASGSARTWAPAALTVPSWPEQPRRHY). N6-acetyllysine is present on residues lysine 45, lysine 48, lysine 67, and lysine 69. An N6-acetyllysine; alternate mark is found at lysine 80 and lysine 106. Residues lysine 80 and lysine 106 each carry the N6-succinyllysine; alternate modification. NADP(+) is bound by residues 115 to 117 (TIT) and arginine 122. Threonine 117 serves as a coordination point for D-threo-isocitrate. Residues 134-140 (SPNGTIR) and arginine 149 contribute to the D-threo-isocitrate site. Position 155 is an N6-acetyllysine (lysine 155). At lysine 166 the chain carries N6-acetyllysine; alternate. Lysine 166 carries the post-translational modification N6-succinyllysine; alternate. Arginine 172 serves as a coordination point for D-threo-isocitrate. Residues lysine 180 and lysine 193 each carry the N6-acetyllysine; alternate modification. Lysine 180 and lysine 193 each carry N6-succinyllysine; alternate. An N6-acetyllysine modification is found at lysine 199. Residue lysine 256 is modified to N6-acetyllysine; alternate. Lysine 256 is subject to N6-succinyllysine; alternate. N6-acetyllysine is present on residues lysine 263, lysine 272, lysine 275, and lysine 280. The residue at position 282 (lysine 282) is an N6-acetyllysine; alternate. Lysine 282 is modified (N6-succinyllysine; alternate). Residue aspartate 291 participates in Mn(2+) binding. Residue lysine 299 coordinates NADP(+). Residue aspartate 314 coordinates Mn(2+). NADP(+)-binding positions include 349-354 (GTVTRH) and asparagine 367. An N6-acetyllysine; alternate modification is found at lysine 384. N6-succinyllysine; alternate is present on lysine 384. N6-acetyllysine is present on residues lysine 400, lysine 413, and lysine 442.

Belongs to the isocitrate and isopropylmalate dehydrogenases family. As to quaternary structure, homodimer. Mg(2+) is required as a cofactor. Mn(2+) serves as cofactor. Acetylation at Lys-413 dramatically reduces catalytic activity. Deacetylated by SIRT3. In terms of tissue distribution, predominantly expressed in heart, liver and kidney. Expressed in activated B lymphocytes.

Its subcellular location is the mitochondrion. It carries out the reaction D-threo-isocitrate + NADP(+) = 2-oxoglutarate + CO2 + NADPH. Functionally, plays a role in intermediary metabolism and energy production. It may tightly associate or interact with the pyruvate dehydrogenase complex. This chain is Isocitrate dehydrogenase [NADP], mitochondrial (Idh2), found in Mus musculus (Mouse).